The primary structure comprises 362 residues: Hepatic sodium/bile acid cotransporter (362 aa).

At 1–22 the chain is on the extracellular side; sequence MEVHNVSAPFNFSLPPGFGHRA. Residues Asn-5 and Asn-11 are each glycosylated (N-linked (GlcNAc...) asparagine). A helical transmembrane segment spans residues 23–44; that stretch reads TDKALSIILVLMLLLIMLSLGC. The Cytoplasmic segment spans residues 45-47; it reads TME. Residues 48–83 form a helical membrane-spanning segment; sequence FSKIKAHLWKPKGVIVALVAQFGIMPLAAFLLGKIF. Topologically, residues 84-86 are extracellular; that stretch reads HLS. A discontinuously helical membrane pass occupies residues 87–112; sequence NIEALAILICGCSPGGNLSNLFTLAM. Topologically, residues 113 to 115 are cytoplasmic; sequence KGD. A helical membrane pass occupies residues 116–142; sequence MNLSIVMTTCSSFSALGMMPLLLYVYS. Over 143-156 the chain is Extracellular; that stretch reads KGIYDGDLKDKVPY. A helical membrane pass occupies residues 157–179; it reads KGIMISLVIVLIPCTIGIVLKSK. The Cytoplasmic portion of the chain corresponds to 180-183; it reads RPHY. Residues 184-217 traverse the membrane as a helical segment; it reads VPYILKGGMIITFLLSVAVTALSVINVGNSIMFV. The Extracellular portion of the chain corresponds to 218-219; it reads MT. A helical membrane pass occupies residues 220 to 243; sequence PHLLATSSLMPFSGFLMGYILSAL. Over 244 to 247 the chain is Cytoplasmic; that stretch reads FQLN. Residues 248-273 form a discontinuously helical membrane-spanning segment; it reads PSCRRTISMETGFQNIQLCSTILNVT. At 274–280 the chain is on the extracellular side; that stretch reads FPPEVIG. The helical transmembrane segment at 281-311 threads the bilayer; that stretch reads PLFFFPLLYMIFQLAEGLLIIIIFRCYEKIK. The Cytoplasmic segment spans residues 312 to 362; it reads PPKDQTKITYKAAATEDATPAALEKGTHNGNIPPLQPGPSPNGLNSGQMAN. A Phosphothreonine modification is found at Thr-330. Residues 333 to 362 are disordered; it reads ALEKGTHNGNIPPLQPGPSPNGLNSGQMAN. Residues 353–362 are compositionally biased toward polar residues; the sequence is NGLNSGQMAN.

Belongs to the bile acid:sodium symporter (BASS) (TC 2.A.28) family. As to expression, highly expressed in liver and low expression in kidney.

It localises to the cell membrane. It carries out the reaction taurocholate(out) + 2 Na(+)(out) = taurocholate(in) + 2 Na(+)(in). It catalyses the reaction taurochenodeoxycholate(out) + 2 Na(+)(out) = taurochenodeoxycholate(in) + 2 Na(+)(in). The enzyme catalyses tauroursodeoxycholate(out) + 2 Na(+)(out) = tauroursodeoxycholate(in) + 2 Na(+)(in). The catalysed reaction is glycocholate(out) + 2 Na(+)(out) = glycocholate(in) + 2 Na(+)(in). It carries out the reaction estrone 3-sulfate(out) + 2 Na(+)(out) = estrone 3-sulfate(in) + 2 Na(+)(in). It catalyses the reaction cholate(out) + 2 Na(+)(out) = cholate(in) + 2 Na(+)(in). The enzyme catalyses tauronorcholate(out) + 2 Na(+)(out) = tauronorcholate(in) + 2 Na(+)(in). The catalysed reaction is taurodeoxycholate(out) + 2 Na(+)(out) = taurodeoxycholate(in) + 2 Na(+)(in). It carries out the reaction tauroallocholate(out) + 2 Na(+)(out) = tauroallocholate(in) + 2 Na(+)(in). It catalyses the reaction taurohyodeoxycholate(out) + 2 Na(+)(out) = taurohyodeoxycholate(in) + 2 Na(+)(in). The enzyme catalyses taurohyocholate(out) + 2 Na(+)(out) = taurohyocholate(in) + 2 Na(+)(in). The catalysed reaction is tauro-beta-muricholate(out) + 2 Na(+)(out) = tauro-beta-muricholate(in) + 2 Na(+)(in). The transport of bile acids is sodium-dependent. Its function is as follows. As a major transporter of conjugated bile salts from plasma into the hepatocyte, it plays a key role in the enterohepatic circulation of bile salts necessary for the solubilization and absorption of dietary fat and fat-soluble vitamins. It is strictly dependent on the extracellular presence of sodium. It exhibits broad substrate specificity and transports various bile acids, such as taurocholate, cholate, as well as non-bile acid organic compounds, such as estrone sulfate. Works collaboratively with the ileal transporter (NTCP2), the organic solute transporter (OST), and the bile salt export pump (BSEP), to ensure efficacious biological recycling of bile acids during enterohepatic circulation. The protein is Hepatic sodium/bile acid cotransporter (Slc10a1) of Rattus norvegicus (Rat).